A 1003-amino-acid chain; its full sequence is Translation initiation factor IF-2 (1003 aa).

Residues 36–392 (SSTIEPPVVK…RQKRNEYESM (357 aa)) are disordered. The span at 62–151 (AAKPAAAKPA…PKPAAAAKPA (90 aa)) shows a compositional bias: low complexity. 2 stretches are compositionally biased toward pro residues: residues 178–190 (DGMP…PAPK) and 213–230 (PRPG…PGGG). Composition is skewed to gly residues over residues 231–243 (PRPQ…GGQR) and 255–271 (GNRG…GPRP). Over residues 273–286 (GGPRPQGGSRPQGG) the composition is skewed to low complexity. Residues 329–372 (GKGGRGGQAGGGAGGGFNRGGGTGGGAGRGGRRGGTAGAFGRPG) show a composition bias toward gly residues. Positions 376-385 (RRGRKSKRQK) are enriched in basic residues. Positions 498 to 670 (KRPPVVTVMG…VCLTADAELD (173 aa)) constitute a tr-type G domain. A G1 region spans residues 507-514 (GHVDHGKT). GTP is bound at residue 507–514 (GHVDHGKT). Residues 532 to 536 (GITQG) form a G2 region. Residues 557–560 (DTPG) form a G3 region. GTP is bound by residues 557–561 (DTPGH) and 611–614 (NKID). Residues 611–614 (NKID) form a G4 region. Residues 647-649 (SAK) are G5.

The protein belongs to the TRAFAC class translation factor GTPase superfamily. Classic translation factor GTPase family. IF-2 subfamily.

The protein localises to the cytoplasm. In terms of biological role, one of the essential components for the initiation of protein synthesis. Protects formylmethionyl-tRNA from spontaneous hydrolysis and promotes its binding to the 30S ribosomal subunits. Also involved in the hydrolysis of GTP during the formation of the 70S ribosomal complex. This is Translation initiation factor IF-2 from Corynebacterium glutamicum (strain R).